The chain runs to 335 residues: Glucose-dependent insulinotropic receptor (335 aa).

Topologically, residues 1-12 are extracellular; that stretch reads MESSFSFGVILA. Residues 13-33 traverse the membrane as a helical segment; that stretch reads VLASLIIATNTLVAVAVLLLI. Residues 34–37 lie on the Cytoplasmic side of the membrane; the sequence is HKND. Residues 38–58 traverse the membrane as a helical segment; the sequence is GVSLCFTLNLAVADTLIGVAI. The Extracellular portion of the chain corresponds to 59-81; it reads SGLLTDQLSSPSRPTQKTLCSLR. Residues 82-102 form a helical membrane-spanning segment; sequence MAFVTSSAAASVLTVMLITFD. At 103-125 the chain is on the cytoplasmic side; sequence RYLAIKQPFRYLKIMSGFVAGAC. A helical transmembrane segment spans residues 126 to 146; that stretch reads IAGLWLVSYLIGFLPLGIPMF. Over 147-164 the chain is Extracellular; it reads QQTAYKGQCSFFAVFHPH. A helical transmembrane segment spans residues 165–185; sequence FVLTLSCVGFFPAMLLFVFFY. The Cytoplasmic portion of the chain corresponds to 186-226; it reads CDMLKIASMHSQQIRKMEHAGAMAGGYRSPRTPSDFKALRT. The helical transmembrane segment at 227–247 threads the bilayer; it reads VSVLIGSFALSWTPFLITGIV. The Extracellular segment spans residues 248 to 262; sequence QVACQECHLYLVLER. The helical transmembrane segment at 263-283 threads the bilayer; sequence YLWLLGVGNSLLNPLIYAYWQ. Topologically, residues 284–335 are cytoplasmic; sequence KEVRLQLYHMALGVKKVLTSFLLFLSARNCGPERPRESSCHIVTISSSEFDG.

Belongs to the G-protein coupled receptor 1 family. As to expression, predominantly expressed in the pancreas, especially in the islets.

It localises to the cell membrane. Functionally, receptor for the endogenous fatty-acid ethanolamide oleoylethanolamide (OEA) and lysophosphatidylcholine (LPC). Functions as a glucose-dependent insulinotropic receptor. The activity of this receptor is mediated by G proteins which activate adenylate cyclase. Seems to act through a G(s) mediated pathway. The chain is Glucose-dependent insulinotropic receptor (GPR119) from Homo sapiens (Human).